The chain runs to 64 residues: MDCRTQRLKNRHSRWAETQAHIPLHAFSMSPILRARHHHFRNTGFAFRQCAQKASFSHPSQLKD.

This is Protein YnhH from Escherichia coli (strain K12).